The chain runs to 883 residues: Phosphoenolpyruvate carboxylase (883 aa).

Active-site residues include His-138 and Lys-546.

The protein belongs to the PEPCase type 1 family. Requires Mg(2+) as cofactor.

It carries out the reaction oxaloacetate + phosphate = phosphoenolpyruvate + hydrogencarbonate. Functionally, forms oxaloacetate, a four-carbon dicarboxylic acid source for the tricarboxylic acid cycle. The sequence is that of Phosphoenolpyruvate carboxylase from Erwinia tasmaniensis (strain DSM 17950 / CFBP 7177 / CIP 109463 / NCPPB 4357 / Et1/99).